Reading from the N-terminus, the 108-residue chain is uncharacterized protein (108 aa).

The residue at position 56 (T56) is a Phosphothreonine. The segment at A89 to F108 is disordered.

It is found in the cytoplasm. This is an uncharacterized protein from Schizosaccharomyces pombe (strain 972 / ATCC 24843) (Fission yeast).